The primary structure comprises 882 residues: DNA mismatch repair protein MutS (882 aa).

Residue 656-663 (GPNASGKS) coordinates ATP.

The protein belongs to the DNA mismatch repair MutS family.

This protein is involved in the repair of mismatches in DNA. It is possible that it carries out the mismatch recognition step. This protein has a weak ATPase activity. In Synechococcus elongatus (strain ATCC 33912 / PCC 7942 / FACHB-805) (Anacystis nidulans R2), this protein is DNA mismatch repair protein MutS.